The following is a 208-amino-acid chain: FMN-dependent NADH:quinone oxidoreductase (208 aa).

FMN is bound by residues S9, 15 to 17 (SVS), 96 to 99 (MYNF), and 140 to 143 (TRGG).

It belongs to the azoreductase type 1 family. In terms of assembly, homodimer. Requires FMN as cofactor.

It catalyses the reaction 2 a quinone + NADH + H(+) = 2 a 1,4-benzosemiquinone + NAD(+). The catalysed reaction is N,N-dimethyl-1,4-phenylenediamine + anthranilate + 2 NAD(+) = 2-(4-dimethylaminophenyl)diazenylbenzoate + 2 NADH + 2 H(+). In terms of biological role, quinone reductase that provides resistance to thiol-specific stress caused by electrophilic quinones. Its function is as follows. Also exhibits azoreductase activity. Catalyzes the reductive cleavage of the azo bond in aromatic azo compounds to the corresponding amines. This chain is FMN-dependent NADH:quinone oxidoreductase, found in Azospirillum brasilense.